We begin with the raw amino-acid sequence, 326 residues long: Melanocortin receptor 4 (326 aa).

Residues 1 to 14 show a composition bias toward basic residues; that stretch reads MNTSHHHGLHHSFR. The tract at residues 1–31 is disordered; the sequence is MNTSHHHGLHHSFRNHSQGALPVGKPSHGDR. The Extracellular segment spans residues 1-46; that stretch reads MNTSHHHGLHHSFRNHSQGALPVGKPSHGDRGSASGCYEQLLISTE. N-linked (GlcNAc...) asparagine glycans are attached at residues N2 and N15. A helical membrane pass occupies residues 47 to 67; sequence IFLTLGLVSLLENILVIAAIV. Residues 68-71 lie on the Cytoplasmic side of the membrane; the sequence is KNKN. The helical transmembrane segment at 72 to 92 threads the bilayer; sequence LHSPMYFFICSLAVADLLVSV. The Extracellular portion of the chain corresponds to 93 to 121; it reads SNASETVVMALITGGNLTNRESIIKNMDN. 2 N-linked (GlcNAc...) asparagine glycosylation sites follow: N94 and N108. A helical membrane pass occupies residues 122–142; the sequence is VFDSMICSSLLASIWSLLAIA. Over 143-163 the chain is Cytoplasmic; that stretch reads VDRYITIFYALRYHNIMTQRR. Residues 164-184 form a helical membrane-spanning segment; sequence AGTIITCIWTFCTVSGVLFIV. At 185-190 the chain is on the extracellular side; that stretch reads YSESTT. Residues 191–211 form a helical membrane-spanning segment; that stretch reads VLICLISMFFTMLALMASLYV. Residues 212-246 are Cytoplasmic-facing; the sequence is HMFLLARLHMKRIAALPGNGPIWQAANMKGAITIT. A helical transmembrane segment spans residues 247–267; the sequence is ILLGVFVVCWAPFFLHLILMI. Over 268–281 the chain is Extracellular; that stretch reads SCPRNPYCVCFMSH. Residues 282 to 302 traverse the membrane as a helical segment; sequence FNMYLILIMCNSVIDPLIYAF. The Cytoplasmic portion of the chain corresponds to 303–326; it reads RSQEMRKTFKEICCCWYGLASLCV. Residue C316 is the site of S-palmitoyl cysteine attachment.

Belongs to the G-protein coupled receptor 1 family. In terms of assembly, homodimer; disulfide-linked, also forms higher order oligomers. Interacts with mrap2a; decreasing ligand-sensitivity. Interacts with mrap2b; increasing ligand-sensitivity and generation of cAMP.

The protein localises to the cell membrane. Receptor specific to the heptapeptide core common to adrenocorticotropic hormone and alpha-, beta-, and gamma-MSH. Plays a central role in energy homeostasis and somatic growth. This receptor is mediated by G proteins that stimulate adenylate cyclase (cAMP). The protein is Melanocortin receptor 4 (mc4r) of Danio rerio (Zebrafish).